Reading from the N-terminus, the 243-residue chain is MLIEHEVAFVLHVRPWRETSLLVEVLTQAYGRLGLIARGVQGLKKQTLRAALQPLQWIRFSAIQRGELGQLRQAEALDTAPRLKGETMLASFYINELLLRLVPRHAPVNELYLAYSQTRERLRTNDSLAWSLRLFERDILETLGVGFNLECDANGTPLDPAAHYVLDPLEGPRRLLSEHNNAERRDTATGHVLLALAHKQIPNTNDLAGLRRSMRAVLLHHLGGRGLKSWEMIAAFRHQDTSP.

It belongs to the RecO family.

Functionally, involved in DNA repair and RecF pathway recombination. The chain is DNA repair protein RecO from Xylella fastidiosa (strain M12).